A 60-amino-acid polypeptide reads, in one-letter code: Mastoparan-VT5 (60 aa).

Positions 1–27 (MKNTILILFTAFIALLGFFGMIAEPLA) are cleaved as a signal peptide. 4 AXPX repeats span residues 27-30 (ADPL), 31-34 (ADPL), 37-40 (ADPD), and 41-44 (ADPE). Positions 28 to 45 (DPLADPLPDADPDADPET) are excised as a propeptide.

It belongs to the MCD family. Mastoparan subfamily. Expressed by the venom gland.

The protein resides in the secreted. Functionally, the synthetic peptide shows weak antimicrobial activities against a few Gram-positive bacteria (only 2 on the 11 strains tested) and the fungus C.albicans. Does not show activity against all the Gram-negative bacteria tested. Exhibits little hemolytic activity against washed human erythrocytes. This chain is Mastoparan-VT5, found in Vespa tropica (Greater banded hornet).